The primary structure comprises 254 residues: NAD-dependent protein deacylase 2 (254 aa).

One can recognise a Deacetylase sirtuin-type domain in the interval 1–254 (MDEHSIMQAV…LPALVRRLGV (254 aa)). 24-44 (GAGMSADSGLETYRDPETGVW) is an NAD(+) binding site. 2 residues coordinate substrate: Y69 and R72. 105-108 (QNID) lines the NAD(+) pocket. H123 functions as the Proton acceptor in the catalytic mechanism. C131, C134, C157, and C160 together coordinate Zn(2+). NAD(+) is bound by residues 197 to 199 (GTS) and A241.

It belongs to the sirtuin family. Class III subfamily. Zn(2+) is required as a cofactor.

Its subcellular location is the cytoplasm. It carries out the reaction N(6)-acetyl-L-lysyl-[protein] + NAD(+) + H2O = 2''-O-acetyl-ADP-D-ribose + nicotinamide + L-lysyl-[protein]. It catalyses the reaction N(6)-succinyl-L-lysyl-[protein] + NAD(+) + H2O = 2''-O-succinyl-ADP-D-ribose + nicotinamide + L-lysyl-[protein]. NAD-dependent lysine deacetylase and desuccinylase that specifically removes acetyl and succinyl groups on target proteins. Modulates the activities of several proteins which are inactive in their acylated form. The chain is NAD-dependent protein deacylase 2 from Corynebacterium efficiens (strain DSM 44549 / YS-314 / AJ 12310 / JCM 11189 / NBRC 100395).